Consider the following 515-residue polypeptide: 1-pyrroline-5-carboxylate dehydrogenase (515 aa).

Active-site residues include glutamate 286 and cysteine 320.

Belongs to the aldehyde dehydrogenase family. RocA subfamily.

It carries out the reaction L-glutamate 5-semialdehyde + NAD(+) + H2O = L-glutamate + NADH + 2 H(+). Its pathway is amino-acid degradation; L-proline degradation into L-glutamate; L-glutamate from L-proline: step 2/2. The chain is 1-pyrroline-5-carboxylate dehydrogenase from Bacillus cereus (strain B4264).